Reading from the N-terminus, the 453-residue chain is Na(+)/H(+) antiporter NhaA 2 (453 aa).

The next 12 membrane-spanning stretches (helical) occupy residues 23 to 43 (FLHI…AALI), 74 to 94 (LHFW…GMEI), 111 to 131 (LPMA…LSFG), 139 to 159 (GWAV…ALLG), 168 to 188 (VFLL…IAFF), 191 to 211 (GGLD…VIGL), 214 to 234 (IGVG…LGIL), 235 to 255 (LTGA…PVTA), 316 to 336 (VAFG…LSGV), 345 to 365 (WVMI…IVSV), 386 to 406 (IVLV…IANL), and 419 to 439 (LGVL…GVWS).

This sequence belongs to the NhaA Na(+)/H(+) (TC 2.A.33) antiporter family.

Its subcellular location is the cell inner membrane. The catalysed reaction is Na(+)(in) + 2 H(+)(out) = Na(+)(out) + 2 H(+)(in). Na(+)/H(+) antiporter that extrudes sodium in exchange for external protons. The chain is Na(+)/H(+) antiporter NhaA 2 from Pseudomonas putida (strain ATCC 700007 / DSM 6899 / JCM 31910 / BCRC 17059 / LMG 24140 / F1).